The following is a 90-amino-acid chain: uncharacterized protein (90 aa).

To E.coli RlpA.

This is an uncharacterized protein from Synechocystis sp. (strain ATCC 27184 / PCC 6803 / Kazusa).